Consider the following 60-residue polypeptide: Ixodegrin-Ip (60 aa).

Residues 1–21 (MNAAFIAALFILGALTLDAMA) form the signal peptide. Positions 49-51 (RGD) match the Cell attachment site motif.

It belongs to the ixodegrin family. Post-translationally, contains 3 disulfide bonds. As to expression, expressed in salivary glands.

Its subcellular location is the secreted. Functionally, tick salivary platelet aggregation inhibitor that plays an important part in the anti-hemostatic strategy of ticks. Inhibits platelet aggregation induced by ADP, thrombin and thromboxane A2 (TXA2). Blocks platelet adhesion to soluble collagen (most probably through the binding to alpha-2/beta-1 integrin (ITGA2/ITGB1)) and binds to purified glycoprotein IIb/IIIa (ITGA2B/ITGB3) in a dose-dependent manner. In vivo, reduces thrombus weight effectively in a rat arteriovenous shunt model and inhibits thrombosis in a carrageenan-induced mouse tail thrombosis model. This is Ixodegrin-Ip from Ixodes pacificus (Western black-legged tick).